We begin with the raw amino-acid sequence, 40 residues long: Photosystem II reaction center protein J (40 aa).

Residues 8–28 (IPLWLIGTVTGIPVIGLVGVF) traverse the membrane as a helical segment.

The protein belongs to the PsbJ family. As to quaternary structure, PSII is composed of 1 copy each of membrane proteins PsbA, PsbB, PsbC, PsbD, PsbE, PsbF, PsbH, PsbI, PsbJ, PsbK, PsbL, PsbM, PsbT, PsbX, PsbY, PsbZ, Psb30/Ycf12, at least 3 peripheral proteins of the oxygen-evolving complex and a large number of cofactors. It forms dimeric complexes.

The protein localises to the plastid. It localises to the chloroplast thylakoid membrane. Functionally, one of the components of the core complex of photosystem II (PSII). PSII is a light-driven water:plastoquinone oxidoreductase that uses light energy to abstract electrons from H(2)O, generating O(2) and a proton gradient subsequently used for ATP formation. It consists of a core antenna complex that captures photons, and an electron transfer chain that converts photonic excitation into a charge separation. This is Photosystem II reaction center protein J from Lolium perenne (Perennial ryegrass).